The chain runs to 153 residues: Putative transmembrane protein INAFM2 (153 aa).

A compositionally biased stretch (basic and acidic residues) spans 1 to 23 (MKERDAAPAERGKPATYTGDKKA). A disordered region spans residues 1–24 (MKERDAAPAERGKPATYTGDKKAK). The chain crosses the membrane as a helical span at residues 36–56 (LATVFAYVLSVSLAAIVLAVY). The disordered stretch occupies residues 66 to 153 (AGTSGGAAGP…EETAAAPGSR (88 aa)). A compositionally biased stretch (low complexity) spans 79–101 (GSNATGPSGTSGAAAAGPNTTGS). Pro residues predominate over residues 118–131 (PAPPEPPADSPPAG).

It is found in the membrane. This Homo sapiens (Human) protein is Putative transmembrane protein INAFM2.